A 177-amino-acid polypeptide reads, in one-letter code: Transcriptional repressor NrdR (177 aa).

A zinc finger lies at cysteine 3 to cysteine 34. The 91-residue stretch at valine 49–aspartate 139 folds into the ATP-cone domain. A disordered region spans residues serine 148–proline 177.

This sequence belongs to the NrdR family. Zn(2+) serves as cofactor.

Negatively regulates transcription of bacterial ribonucleotide reductase nrd genes and operons by binding to NrdR-boxes. The sequence is that of Transcriptional repressor NrdR from Methylobacterium radiotolerans (strain ATCC 27329 / DSM 1819 / JCM 2831 / NBRC 15690 / NCIMB 10815 / 0-1).